The primary structure comprises 357 residues: Uroporphyrinogen decarboxylase (357 aa).

Substrate is bound by residues Arg27–Arg31, Asp77, Tyr154, Ser209, and His330.

It belongs to the uroporphyrinogen decarboxylase family. In terms of assembly, homodimer.

It localises to the cytoplasm. It carries out the reaction uroporphyrinogen III + 4 H(+) = coproporphyrinogen III + 4 CO2. The protein operates within porphyrin-containing compound metabolism; protoporphyrin-IX biosynthesis; coproporphyrinogen-III from 5-aminolevulinate: step 4/4. In terms of biological role, catalyzes the decarboxylation of four acetate groups of uroporphyrinogen-III to yield coproporphyrinogen-III. The protein is Uroporphyrinogen decarboxylase of Acinetobacter baumannii (strain AB0057).